Reading from the N-terminus, the 612-residue chain is Dihydroxy-acid dehydratase (612 aa).

Residue aspartate 81 participates in Mg(2+) binding. Cysteine 122 provides a ligand contact to [2Fe-2S] cluster. The Mg(2+) site is built by aspartate 123 and lysine 124. Lysine 124 is subject to N6-carboxylysine. Cysteine 193 serves as a coordination point for [2Fe-2S] cluster. Glutamate 489 is a Mg(2+) binding site. Serine 515 (proton acceptor) is an active-site residue.

Belongs to the IlvD/Edd family. Homodimer. Requires [2Fe-2S] cluster as cofactor. It depends on Mg(2+) as a cofactor.

The enzyme catalyses (2R)-2,3-dihydroxy-3-methylbutanoate = 3-methyl-2-oxobutanoate + H2O. The catalysed reaction is (2R,3R)-2,3-dihydroxy-3-methylpentanoate = (S)-3-methyl-2-oxopentanoate + H2O. Its pathway is amino-acid biosynthesis; L-isoleucine biosynthesis; L-isoleucine from 2-oxobutanoate: step 3/4. It functions in the pathway amino-acid biosynthesis; L-valine biosynthesis; L-valine from pyruvate: step 3/4. In terms of biological role, functions in the biosynthesis of branched-chain amino acids. Catalyzes the dehydration of (2R,3R)-2,3-dihydroxy-3-methylpentanoate (2,3-dihydroxy-3-methylvalerate) into 2-oxo-3-methylpentanoate (2-oxo-3-methylvalerate) and of (2R)-2,3-dihydroxy-3-methylbutanoate (2,3-dihydroxyisovalerate) into 2-oxo-3-methylbutanoate (2-oxoisovalerate), the penultimate precursor to L-isoleucine and L-valine, respectively. The polypeptide is Dihydroxy-acid dehydratase (Stutzerimonas stutzeri (strain A1501) (Pseudomonas stutzeri)).